Reading from the N-terminus, the 437-residue chain is Phosphomethylpyrimidine synthase (437 aa).

Substrate-binding positions include asparagine 69, methionine 98, tyrosine 127, histidine 163, 185-187 (SRG), 226-229 (DACR), and glutamate 265. Histidine 269 is a Zn(2+) binding site. Tyrosine 292 is a binding site for substrate. Histidine 333 provides a ligand contact to Zn(2+). [4Fe-4S] cluster-binding residues include cysteine 409, cysteine 412, and cysteine 416.

This sequence belongs to the ThiC family. The cofactor is [4Fe-4S] cluster.

The enzyme catalyses 5-amino-1-(5-phospho-beta-D-ribosyl)imidazole + S-adenosyl-L-methionine = 4-amino-2-methyl-5-(phosphooxymethyl)pyrimidine + CO + 5'-deoxyadenosine + formate + L-methionine + 3 H(+). Its pathway is cofactor biosynthesis; thiamine diphosphate biosynthesis. Its function is as follows. Catalyzes the synthesis of the hydroxymethylpyrimidine phosphate (HMP-P) moiety of thiamine from aminoimidazole ribotide (AIR) in a radical S-adenosyl-L-methionine (SAM)-dependent reaction. This is Phosphomethylpyrimidine synthase from Clostridium botulinum (strain ATCC 19397 / Type A).